Reading from the N-terminus, the 445-residue chain is MGSALENYVNQVRTLSASGSYRELAEELPESLSLLARNWSILDNVLETLDMQQHSLGVLYVLLAKLHSASTANPEPVQLIQLMRDFVQRNNNEQLRYAVCAFYETCHLFTEFVVQKNLSILGIRIISRAIDQIRQLETQLTPIHADLCLLSLKAKNFSVVLPYLDADITDISTVAAECKTQQQQQSQHADANNDAKYFLLYFYYGGMIYTAVKNYERALYFFEVCITTPAMAMSHIMLEAYKKFLMVSLIVEGKIAYIPKNTQVIGRFMKPMANHYHDLVNVYANSSSEELRIIILKYSEAFTRDNNMGLAKQVATSLYKRNIQRLTKTFLTLSLSDVASRVQLASAVEAERYILNMIKSGEIYASINQKDGMVLFKDDPEKYNSPEMFLNVQNNITHVLDQVRQINKMEEEIILNPMYVKKALGSQDDDLTSQHPKTFSGDPTD.

The PCI domain maps to 217 to 381 (RALYFFEVCI…GMVLFKDDPE (165 aa)). A disordered region spans residues 426 to 445 (SQDDDLTSQHPKTFSGDPTD). Over residues 433 to 445 (SQHPKTFSGDPTD) the composition is skewed to polar residues.

The protein belongs to the CSN3 family. As to quaternary structure, component of the CSN complex, probably composed of CSN1b, alien/CSN2, CSN3, CSN4, CSN5, CSN6, CSN7 and CSN8.

Its subcellular location is the cytoplasm. The protein resides in the nucleus. Component of the COP9 signalosome complex (CSN), a complex involved in various cellular and developmental processes. The CSN complex is an essential regulator of the ubiquitin (Ubl) conjugation pathway by mediating the deneddylation of the cullin subunits of the SCF-type E3 ligase complexes, leading to decrease the Ubl ligase activity of SCF. The CSN complex plays an essential role in oogenesis and embryogenesis and is required for proper photoreceptor R cell differentiation and promote lamina glial cell migration or axon targeting. It also promotes Ubl-dependent degradation of cyclin E (CycE) during early oogenesis. This is COP9 signalosome complex subunit 3 (CSN3) from Drosophila melanogaster (Fruit fly).